Consider the following 321-residue polypeptide: Glycolipid transfer protein domain-containing protein 2 (321 aa).

This sequence belongs to the GLTP family.

The chain is Glycolipid transfer protein domain-containing protein 2 (Gltpd2) from Mus musculus (Mouse).